Reading from the N-terminus, the 209-residue chain is Large ribosomal subunit protein uL3 (209 aa).

The interval 127–152 is disordered; that stretch reads SGGPSSHGSKFHRHLGSTGQAATPSR. Residues 143 to 152 are compositionally biased toward polar residues; sequence STGQAATPSR.

It belongs to the universal ribosomal protein uL3 family. As to quaternary structure, part of the 50S ribosomal subunit. Forms a cluster with proteins L14 and L19.

In terms of biological role, one of the primary rRNA binding proteins, it binds directly near the 3'-end of the 23S rRNA, where it nucleates assembly of the 50S subunit. The sequence is that of Large ribosomal subunit protein uL3 from Borrelia hermsii (strain HS1 / DAH).